Here is a 237-residue protein sequence, read N- to C-terminus: 1-(5-phosphoribosyl)-5-[(5-phosphoribosylamino)methylideneamino] imidazole-4-carboxamide isomerase (237 aa).

The active-site Proton acceptor is the Asp-8. Asp-130 acts as the Proton donor in catalysis.

Belongs to the HisA/HisF family.

The protein resides in the cytoplasm. It catalyses the reaction 1-(5-phospho-beta-D-ribosyl)-5-[(5-phospho-beta-D-ribosylamino)methylideneamino]imidazole-4-carboxamide = 5-[(5-phospho-1-deoxy-D-ribulos-1-ylimino)methylamino]-1-(5-phospho-beta-D-ribosyl)imidazole-4-carboxamide. Its pathway is amino-acid biosynthesis; L-histidine biosynthesis; L-histidine from 5-phospho-alpha-D-ribose 1-diphosphate: step 4/9. The sequence is that of 1-(5-phosphoribosyl)-5-[(5-phosphoribosylamino)methylideneamino] imidazole-4-carboxamide isomerase from Caldicellulosiruptor bescii (strain ATCC BAA-1888 / DSM 6725 / KCTC 15123 / Z-1320) (Anaerocellum thermophilum).